A 262-amino-acid chain; its full sequence is Small ribosomal subunit protein uS2 (262 aa).

The disordered stretch occupies residues 236 to 262; that stretch reads AGGAAEAPAAEDVQTEEAAAPEADSAE.

Belongs to the universal ribosomal protein uS2 family.

The sequence is that of Small ribosomal subunit protein uS2 from Psychrobacter sp. (strain PRwf-1).